The chain runs to 383 residues: MKNVLPPFIEIYRALIATPSISATEESLDQSNASLITLLAGWFSDLGFNVEVQPVPGTRNKFNMLASTGHGAGGLLLTGHTDTVPFDDGRWTRDPFTLTEHDNKLYGLGTADMKGFFAFILDALRDVDVTKLKKPLYILATADEETSMAGARYFSETTALRPDCAIIGEPTSLQPIRAHKGHISDVVRVLGQSGHSSDPARGVNAIELMHDAIGHIMQLRDSLKARYHYEAFTVPYPTLNLGHIHGGDASNRICACCELHMDIRPLPGMTLNDLNGLLNDALAPVSERWPGRLTVAELHPPIPGYECPPDHQLVEVVEKLLGTKTDVVNYCTEAPFMQTLCPTLVLGPGSINQAHQPDEYLETRFIKPTRELITQVVHHFCWH.

H80 provides a ligand contact to Zn(2+). D82 is an active-site residue. A Zn(2+)-binding site is contributed by D112. The active site involves E144. Zn(2+) is bound by residues E145, E169, and H355.

The protein belongs to the peptidase M20A family. ArgE subfamily. In terms of assembly, homodimer. It depends on Zn(2+) as a cofactor. Co(2+) serves as cofactor. The cofactor is glutathione.

It is found in the cytoplasm. It catalyses the reaction N(2)-acetyl-L-ornithine + H2O = L-ornithine + acetate. It functions in the pathway amino-acid biosynthesis; L-arginine biosynthesis; L-ornithine from N(2)-acetyl-L-ornithine (linear): step 1/1. In terms of biological role, catalyzes the hydrolysis of the amide bond of N(2)-acetylated L-amino acids. Cleaves the acetyl group from N-acetyl-L-ornithine to form L-ornithine, an intermediate in L-arginine biosynthesis pathway, and a branchpoint in the synthesis of polyamines. The chain is Acetylornithine deacetylase from Salmonella paratyphi A (strain ATCC 9150 / SARB42).